The primary structure comprises 310 residues: MDVLVTGGAGFIGSNFVRYLLDNSDDSVVTLDALTYAGSRDNLAGYLDHPNHRFVEGDIRDRELVDDLVADADVIVNFAAESHVDRSIGGAEPFVSTNVQGTQTLLDAALDADIDRFLQISTDEVYGEIHDGKFTEDDPLAPRNPYSATKAGADLLVRSYRETHDLPTLITRTCNNFGPRQHPEKLIPKFIQRAANGETLPVYGDGSNVREWIYVEDNCAALDVVLREGDIGEVYNIGSGVELSNLETTEKILEAVGGSEDQIEFVEDRAGHDQRYAIDATKTKALGWEPEWSFEDGLEACVDYYLGDDE.

Residues glycine 7–glycine 13, aspartate 32–threonine 35, and aspartate 58–isoleucine 59 each bind NAD(+). Serine 82 contributes to the substrate binding site. NAD(+) is bound at residue threonine 97. Residues threonine 122 and threonine 122–glutamate 124 contribute to the substrate site. Catalysis depends on aspartate 123, which acts as the Proton donor. Residues glutamate 124 and tyrosine 146 each act as proton acceptor in the active site. An NAD(+)-binding site is contributed by tyrosine 146 to lysine 150. Asparagine 175 provides a ligand contact to substrate. An NAD(+)-binding site is contributed by asparagine 176. Residues lysine 185–leucine 186, proline 201–tyrosine 203, arginine 210, asparagine 245, and arginine 269–histidine 272 contribute to the substrate site.

The protein belongs to the NAD(P)-dependent epimerase/dehydratase family. dTDP-glucose dehydratase subfamily. Requires NAD(+) as cofactor.

Its pathway is protein modification; protein glycosylation. It participates in cell surface structure biogenesis; S-layer biogenesis. Functionally, lyase involved in N-glycan biosynthetic pathway that takes place under low-salt conditions (1.75 M instead of 3.4 M). Participates in the formation of the tetrasaccharide present at 'Asn-532' of S-layer glycoprotein Csg, consisting of a sulfated hexose, 2 hexoses and rhamnose. Involved in the addition of final rhamnose (sugar 4) of the tetrasaccharide on the dolichol phosphate carrier. This is Low-salt glycan biosynthesis protein Agl12 (agl12) from Haloferax volcanii (strain ATCC 29605 / DSM 3757 / JCM 8879 / NBRC 14742 / NCIMB 2012 / VKM B-1768 / DS2) (Halobacterium volcanii).